Consider the following 322-residue polypeptide: Chromoplast-specific carotenoid-associated protein, chromoplastic (322 aa).

A chromoplast-targeting transit peptide spans 1-58 (MAFVSQFNQLPCKTLALNPPQPQLTSKPSVFPIASIGATARAAAGKSLISVRPAFKVR). A disordered region spans residues 67–88 (GEDKDEKYGDDSSVAVAEKEEE).

The protein belongs to the PAP/fibrillin family. Expressed in corollas. Not detected in fruits, stems, leaves, and roots.

It is found in the plastid. The protein resides in the chromoplast. May be involved in carotenoid sequestration within chromoplasts. The sequence is that of Chromoplast-specific carotenoid-associated protein, chromoplastic (CHRC) from Cucumis sativus (Cucumber).